We begin with the raw amino-acid sequence, 540 residues long: Probable ATP-dependent RNA helicase DDX28 (540 aa).

The Mitochondrial targeting signal motif lies at 3–18 (LAGPSRLLALAVRLLL). A Q motif motif is present at residues 126-156 (GSFVDLGLEPRVLLALQEAVPEVVQPTSVQS). Residues 159 to 351 (IPPLLRGRHL…SKVTSPDSLT (193 aa)) form the Helicase ATP-binding domain. 172–179 (AETGSGKT) provides a ligand contact to ATP. The short motif at 180 to 191 (LSYLLPLFQRLL) is the Nuclear export signal element. The short motif at 286-289 (DEVD) is the DEAD element. In terms of domain architecture, Helicase C-terminal spans 377-536 (KVTELVQILK…GLASSVGDPL (160 aa)). The Nuclear localization signal signature appears at 520–523 (RRRR).

This sequence belongs to the DEAD box helicase family. In terms of assembly, monomer. Found in a complex with GRSF1, DHX30, FASTKD2 and FASTKD5. Associates with the 16S mitochondrial rRNA (16S mt-rRNA) and with the mitochondrial ribosome large subunit (39S).

Its subcellular location is the nucleus. The protein localises to the mitochondrion. The protein resides in the mitochondrion matrix. It is found in the mitochondrion nucleoid. The enzyme catalyses ATP + H2O = ADP + phosphate + H(+). Its function is as follows. Plays an essential role in facilitating the proper assembly of the mitochondrial large ribosomal subunit and its helicase activity is essential for this function. May be involved in RNA processing or transport. Has RNA and Mg(2+)-dependent ATPase activity. This is Probable ATP-dependent RNA helicase DDX28 (Ddx28) from Mus musculus (Mouse).